The chain runs to 353 residues: D-alanine--D-alanine ligase (353 aa).

Residues 141–349 (KAALAGAGLA…LEQLVHELLE (209 aa)) enclose the ATP-grasp domain. Residue 176-231 (ESGLCYPCFIKPANLGSSVGISKARNREELIHGLRLAATLDPRLVVEQGVQARELE) coordinates ATP. Aspartate 302, glutamate 316, and asparagine 318 together coordinate Mg(2+).

It belongs to the D-alanine--D-alanine ligase family. Mg(2+) is required as a cofactor. Mn(2+) serves as cofactor.

It localises to the cytoplasm. The catalysed reaction is 2 D-alanine + ATP = D-alanyl-D-alanine + ADP + phosphate + H(+). The protein operates within cell wall biogenesis; peptidoglycan biosynthesis. Its function is as follows. Cell wall formation. The polypeptide is D-alanine--D-alanine ligase (Parasynechococcus marenigrum (strain WH8102)).